The chain runs to 424 residues: Gamma-glutamyl phosphate reductase (424 aa).

Belongs to the gamma-glutamyl phosphate reductase family.

It localises to the cytoplasm. It carries out the reaction L-glutamate 5-semialdehyde + phosphate + NADP(+) = L-glutamyl 5-phosphate + NADPH + H(+). The protein operates within amino-acid biosynthesis; L-proline biosynthesis; L-glutamate 5-semialdehyde from L-glutamate: step 2/2. Its function is as follows. Catalyzes the NADPH-dependent reduction of L-glutamate 5-phosphate into L-glutamate 5-semialdehyde and phosphate. The product spontaneously undergoes cyclization to form 1-pyrroline-5-carboxylate. The protein is Gamma-glutamyl phosphate reductase of Parvibaculum lavamentivorans (strain DS-1 / DSM 13023 / NCIMB 13966).